The chain runs to 283 residues: Orotidine 5'-phosphate decarboxylase (283 aa).

Lys-97 acts as the Proton donor in catalysis.

The protein belongs to the OMP decarboxylase family. Type 2 subfamily.

The catalysed reaction is orotidine 5'-phosphate + H(+) = UMP + CO2. It functions in the pathway pyrimidine metabolism; UMP biosynthesis via de novo pathway; UMP from orotate: step 2/2. The polypeptide is Orotidine 5'-phosphate decarboxylase (Clostridium botulinum (strain Okra / Type B1)).